The sequence spans 140 residues: Nucleoside diphosphate kinase (140 aa).

ATP-binding residues include Lys-11, Phe-59, Arg-87, Thr-93, Arg-104, and Asn-114. The active-site Pros-phosphohistidine intermediate is His-117.

It belongs to the NDK family. Homotetramer. Mg(2+) is required as a cofactor.

Its subcellular location is the cytoplasm. The catalysed reaction is a 2'-deoxyribonucleoside 5'-diphosphate + ATP = a 2'-deoxyribonucleoside 5'-triphosphate + ADP. The enzyme catalyses a ribonucleoside 5'-diphosphate + ATP = a ribonucleoside 5'-triphosphate + ADP. In terms of biological role, major role in the synthesis of nucleoside triphosphates other than ATP. The ATP gamma phosphate is transferred to the NDP beta phosphate via a ping-pong mechanism, using a phosphorylated active-site intermediate. The chain is Nucleoside diphosphate kinase from Rhodopseudomonas palustris (strain BisB5).